The chain runs to 185 residues: Elongation factor P (185 aa).

Belongs to the elongation factor P family.

The protein resides in the cytoplasm. It participates in protein biosynthesis; polypeptide chain elongation. Involved in peptide bond synthesis. Stimulates efficient translation and peptide-bond synthesis on native or reconstituted 70S ribosomes in vitro. Probably functions indirectly by altering the affinity of the ribosome for aminoacyl-tRNA, thus increasing their reactivity as acceptors for peptidyl transferase. The chain is Elongation factor P from Bacillus cereus (strain 03BB102).